A 324-amino-acid polypeptide reads, in one-letter code: Aldo-keto reductase family 1 member C15 (324 aa).

NADP(+)-binding positions include 24–26 (TFA) and D51. Residue Y56 is the Proton donor of the active site. H118 is a substrate binding site. NADP(+) contacts are provided by residues 167–168 (SN), Q191, 217–225 (YSALGSHRD), and 269–281 (LAKS…IKEN).

Belongs to the aldo/keto reductase family. As to quaternary structure, monomer. As to expression, expressed in lung, specifically in bronchiolar club cells, type II alveolar cells and epithelial cells of the duct of the bronchial gland (at protein level). Expressed in gastric parietal cells and in epithelial cells of the large intestine and colon (at protein level). Expressed in brown adipocytes (at protein level). Expressed in vascular endothelial cells (at protein level).

Its subcellular location is the cytoplasm. It catalyses the reaction (2E,6E)-farnesol + NADP(+) = (2E,6E)-farnesal + NADPH + H(+). Its activity is regulated as follows. The dehydrogenase activity is inhibited by 3',3'',5',5''-tetraiodophenolphthalein, phenolphthalein, genistein, quercetin, zearalenone and diethylstilbestrol. Functionally, catalyzes the NADPH-dependent reduction of a variety of substrates including aromatic and aliphatic aldehydes, quinones, ketones, dicarbonyl compounds and 17-ketosteroids. Catalyzes the NADP(+)-dependent oxidation of aromatic, alicyclic and aliphatic alcohols, and 17beta-hydroxysteroids. To a lesser extent, can also catalyze the reduction of some aldoses and ketoses and the oxidation of some sugar alcohols. In the stomach, lung and colon tissues, mediates the reduction of farnesal and geranylgeranial into farnesol and geranylgeraniol respectively. By reducing 4-hydroxy-2-nonenal (HNE), produced during lipid peroxidation, into 1,4-dihydro-2-nonene (DHN), protects vascular endothelial cells from damage elicited by oxidized lipoproteins. This chain is Aldo-keto reductase family 1 member C15, found in Rattus norvegicus (Rat).